Consider the following 63-residue polypeptide: Large ribosomal subunit protein uL29 (63 aa).

This sequence belongs to the universal ribosomal protein uL29 family.

This is Large ribosomal subunit protein uL29 (rpmC) from Aggregatibacter actinomycetemcomitans (Actinobacillus actinomycetemcomitans).